The primary structure comprises 600 residues: Zinc metalloproteinase-disintegrin-like cobrin (600 aa).

The first 8 residues, 1–8 (MIQLSWSS), serve as a signal peptide directing secretion. Residues 9–179 (IILESGNVND…DEPIKKTSLL (171 aa)) constitute a propeptide that is removed on maturation. In terms of domain architecture, Peptidase M12B spans 193–388 (KYIEFYMVVD…DRPQCILNKP (196 aa)). Positions 196 and 280 each coordinate Ca(2+). Disulfide bonds link cysteine 304–cysteine 383, cysteine 344–cysteine 367, and cysteine 346–cysteine 351. Zn(2+) contacts are provided by histidine 329, histidine 333, and histidine 339. Residues cysteine 383, asparagine 386, isoleucine 398, asparagine 401, phenylalanine 403, glutamate 405, glutamate 408, and aspartate 411 each contribute to the Ca(2+) site. One can recognise a Disintegrin domain in the interval 396–482 (PPICGNYFVE…ECPTDVFQRN (87 aa)). Intrachain disulfides connect cysteine 399/cysteine 428, cysteine 410/cysteine 423, cysteine 412/cysteine 418, cysteine 422/cysteine 445, cysteine 436/cysteine 442, cysteine 441/cysteine 467, cysteine 454/cysteine 474, cysteine 461/cysteine 492, cysteine 486/cysteine 497, cysteine 504/cysteine 554, cysteine 519/cysteine 562, cysteine 532/cysteine 542, cysteine 549/cysteine 588, and cysteine 582/cysteine 593. Asparagine 424 is a glycosylation site (N-linked (GlcNAc...) asparagine). The short motif at 460-462 (DCD) is the D/ECD-tripeptide element. Ca(2+) is bound by residues aspartate 462, leucine 463, glutamate 465, aspartate 477, and valine 478.

It belongs to the venom metalloproteinase (M12B) family. P-III subfamily. P-IIIa sub-subfamily. In terms of assembly, monomer. Zn(2+) serves as cofactor. In terms of tissue distribution, expressed by the venom gland.

It localises to the secreted. Its function is as follows. Snake venom zinc metalloproteinase that may cleave complement protein C3 into C3c-like (C3o). The sequence is that of Zinc metalloproteinase-disintegrin-like cobrin from Naja kaouthia (Monocled cobra).